Reading from the N-terminus, the 433-residue chain is Signal recognition particle 54 kDa protein (433 aa).

Residues G106–T113, D186–R190, and T244–D247 contribute to the GTP site.

It belongs to the GTP-binding SRP family. SRP54 subfamily. As to quaternary structure, part of the signal recognition particle protein translocation system, which is composed of SRP and FtsY. Archaeal SRP consists of a 7S RNA molecule of 300 nucleotides and two protein subunits: SRP54 and SRP19.

It localises to the cytoplasm. It catalyses the reaction GTP + H2O = GDP + phosphate + H(+). Its function is as follows. Involved in targeting and insertion of nascent membrane proteins into the cytoplasmic membrane. Binds to the hydrophobic signal sequence of the ribosome-nascent chain (RNC) as it emerges from the ribosomes. The SRP-RNC complex is then targeted to the cytoplasmic membrane where it interacts with the SRP receptor FtsY. The chain is Signal recognition particle 54 kDa protein from Pyrobaculum aerophilum (strain ATCC 51768 / DSM 7523 / JCM 9630 / CIP 104966 / NBRC 100827 / IM2).